Consider the following 469-residue polypeptide: Regulator of G-protein signaling 7 (469 aa).

Residues 37 to 112 enclose the DEP domain; it reads EKNGIPIRTV…DDGTFYRFQT (76 aa). Residues Ser229 and Ser241 each carry the phosphoserine modification. Residues 235 to 256 form a disordered region; the sequence is NDIRSHSPTHTPTPETKPPTED. A Phosphothreonine modification is found at Thr243. The G protein gamma domain occupies 255–316; the sequence is EDELQQQIKY…LSDDTTFWEL (62 aa). The 116-residue stretch at 333–448 folds into the RGS domain; it reads GMDEALKDPV…IRSSAYQELL (116 aa). At Ser434 the chain carries Phosphoserine.

Interacts with GNB5, forming the RGS7-GNB5 complex. Interacts with GPR158; promotes the GTPase activator activity of the RGS7-GNB5 complex in absence of glycine, in contrast GTPase activator activity of the RGS7-GNB5 complex is inhibited in presence of glycine. Interacts with GPR179. Interacts with PKD1; this prevents rapid proteasomal degradation. Interacts with RGS7BP, leading to regulate the subcellular location of the heterodimer formed with GNB5. Interacts (phosphorylated form) with 14-3-3 protein YWHAQ. Interacts with SNAPIN. Interacts with GNAI1. Interacts with GNAO1, GNAI3 and GNAZ. Palmitoylated. Post-translationally, ubiquitinated, leading to rapid proteasomal degradation. In terms of processing, phosphorylation and subsequent interaction with 14-3-3 proteins inhibits GAP activity. In terms of tissue distribution, detected in retina (at protein level).

The protein resides in the cytoplasm. It is found in the cytosol. Its subcellular location is the cell membrane. The protein localises to the membrane. Functionally, GTPase activator component of the RGS7-GNB5 complex that regulates G protein-coupled receptor signaling cascades. The RGS7-GNB5 complex acts as an inhibitor signal transduction by promoting the GTPase activity of G protein alpha subunits, such as GNAO1, thereby driving them into their inactive GDP-bound form. May play a role in synaptic vesicle exocytosis. Glycine-dependent regulation of the RGS7-GNB5 complex by GPR158 affects mood and cognition via its ability to regulate neuronal excitability in L2/L3 pyramidal neurons of the prefrontal cortex. Modulates the activity of potassium channels that are activated by GNAO1 in response to muscarinic acetylcholine receptor M2/CHRM2 signaling. The sequence is that of Regulator of G-protein signaling 7 (RGS7) from Bos taurus (Bovine).